Here is a 128-residue protein sequence, read N- to C-terminus: Thor profilin (128 aa).

This sequence belongs to the Asgard profilin family.

It is found in the cytoplasm. It localises to the cytoskeleton. Its function is as follows. Has no profilin activity against rabbit actin. This Thorarchaeota archaeon (strain AB_25) protein is Thor profilin.